The primary structure comprises 424 residues: Tyrosine--tRNA ligase (424 aa).

Tyr37 is a binding site for L-tyrosine. Positions 42-51 match the 'HIGH' region motif; sequence PTADSLHLGH. L-tyrosine contacts are provided by Tyr175 and Gln179. Residues 235-239 carry the 'KMSKS' region motif; the sequence is KFGKT. Lys238 serves as a coordination point for ATP. Residues 357-414 enclose the S4 RNA-binding domain; it reads ADLMQALVDAELQPSRGQARKTIASNAVTINGEKQSDPEYIFNDEDRLFGRYTLLRRG.

The protein belongs to the class-I aminoacyl-tRNA synthetase family. TyrS type 1 subfamily. In terms of assembly, homodimer.

It is found in the cytoplasm. The enzyme catalyses tRNA(Tyr) + L-tyrosine + ATP = L-tyrosyl-tRNA(Tyr) + AMP + diphosphate + H(+). In terms of biological role, catalyzes the attachment of tyrosine to tRNA(Tyr) in a two-step reaction: tyrosine is first activated by ATP to form Tyr-AMP and then transferred to the acceptor end of tRNA(Tyr). The chain is Tyrosine--tRNA ligase from Salmonella agona (strain SL483).